A 632-amino-acid polypeptide reads, in one-letter code: tRNA uridine 5-carboxymethylaminomethyl modification enzyme MnmG (632 aa).

FAD contacts are provided by residues Gly-15–Gly-20, Ile-127, and Ser-182. Gly-276 to Phe-290 is a binding site for NAD(+). Gln-373 lines the FAD pocket.

The protein belongs to the MnmG family. In terms of assembly, homodimer. Heterotetramer of two MnmE and two MnmG subunits. FAD serves as cofactor.

Its subcellular location is the cytoplasm. In terms of biological role, NAD-binding protein involved in the addition of a carboxymethylaminomethyl (cmnm) group at the wobble position (U34) of certain tRNAs, forming tRNA-cmnm(5)s(2)U34. In Streptococcus pyogenes serotype M2 (strain MGAS10270), this protein is tRNA uridine 5-carboxymethylaminomethyl modification enzyme MnmG.